We begin with the raw amino-acid sequence, 542 residues long: Chaperonin GroEL (542 aa).

Residues 29–32 (TLGP), 86–90 (DGTTT), Gly413, 476–478 (NAA), and Asp492 each bind ATP.

Belongs to the chaperonin (HSP60) family. As to quaternary structure, forms a cylinder of 14 subunits composed of two heptameric rings stacked back-to-back. Interacts with the co-chaperonin GroES.

It localises to the cytoplasm. The enzyme catalyses ATP + H2O + a folded polypeptide = ADP + phosphate + an unfolded polypeptide.. Together with its co-chaperonin GroES, plays an essential role in assisting protein folding. The GroEL-GroES system forms a nano-cage that allows encapsulation of the non-native substrate proteins and provides a physical environment optimized to promote and accelerate protein folding. This chain is Chaperonin GroEL, found in Lactococcus lactis subsp. lactis (strain IL1403) (Streptococcus lactis).